The chain runs to 95 residues: MSVDLQTVKRVARLARIAVSEEDAERMTGELNAILGFVEQLNEVDVSGVEPMTSVTPMEMKKRQDVVTDGNKAADIVANAPATEENFFLVPKVVE.

This sequence belongs to the GatC family. Heterotrimer of A, B and C subunits.

It carries out the reaction L-glutamyl-tRNA(Gln) + L-glutamine + ATP + H2O = L-glutaminyl-tRNA(Gln) + L-glutamate + ADP + phosphate + H(+). The catalysed reaction is L-aspartyl-tRNA(Asn) + L-glutamine + ATP + H2O = L-asparaginyl-tRNA(Asn) + L-glutamate + ADP + phosphate + 2 H(+). In terms of biological role, allows the formation of correctly charged Asn-tRNA(Asn) or Gln-tRNA(Gln) through the transamidation of misacylated Asp-tRNA(Asn) or Glu-tRNA(Gln) in organisms which lack either or both of asparaginyl-tRNA or glutaminyl-tRNA synthetases. The reaction takes place in the presence of glutamine and ATP through an activated phospho-Asp-tRNA(Asn) or phospho-Glu-tRNA(Gln). The chain is Glutamyl-tRNA(Gln) amidotransferase subunit C from Mesorhizobium japonicum (strain LMG 29417 / CECT 9101 / MAFF 303099) (Mesorhizobium loti (strain MAFF 303099)).